A 195-amino-acid chain; its full sequence is Probable molybdenum cofactor guanylyltransferase (195 aa).

GTP is bound by residues 6-8 (LAG), K18, D67, and D93. Residue D93 participates in Mg(2+) binding.

This sequence belongs to the MobA family. Mg(2+) serves as cofactor.

Its subcellular location is the cytoplasm. The enzyme catalyses Mo-molybdopterin + GTP + H(+) = Mo-molybdopterin guanine dinucleotide + diphosphate. Its function is as follows. Transfers a GMP moiety from GTP to Mo-molybdopterin (Mo-MPT) cofactor (Moco or molybdenum cofactor) to form Mo-molybdopterin guanine dinucleotide (Mo-MGD) cofactor. This chain is Probable molybdenum cofactor guanylyltransferase, found in Thermococcus sibiricus (strain DSM 12597 / MM 739).